Here is a 252-residue protein sequence, read N- to C-terminus: 5-oxoprolinase subunit A (252 aa).

This sequence belongs to the LamB/PxpA family. In terms of assembly, forms a complex composed of PxpA, PxpB and PxpC.

It catalyses the reaction 5-oxo-L-proline + ATP + 2 H2O = L-glutamate + ADP + phosphate + H(+). Its function is as follows. Catalyzes the cleavage of 5-oxoproline to form L-glutamate coupled to the hydrolysis of ATP to ADP and inorganic phosphate. The polypeptide is 5-oxoprolinase subunit A (Corynebacterium glutamicum (strain R)).